The primary structure comprises 642 residues: 1,4-alpha-glucan branching enzyme GlgB (642 aa).

Asp-304 acts as the Nucleophile in catalysis. The active-site Proton donor is Glu-355.

This sequence belongs to the glycosyl hydrolase 13 family. GlgB subfamily. As to quaternary structure, monomer.

It catalyses the reaction Transfers a segment of a (1-&gt;4)-alpha-D-glucan chain to a primary hydroxy group in a similar glucan chain.. It participates in glycan biosynthesis; glycogen biosynthesis. Catalyzes the formation of the alpha-1,6-glucosidic linkages in glycogen by scission of a 1,4-alpha-linked oligosaccharide from growing alpha-1,4-glucan chains and the subsequent attachment of the oligosaccharide to the alpha-1,6 position. The sequence is that of 1,4-alpha-glucan branching enzyme GlgB from Streptococcus pneumoniae serotype 4 (strain ATCC BAA-334 / TIGR4).